Reading from the N-terminus, the 152-residue chain is METPKLSVEAIEKGTVIDHIPAGRGLTILRQFKLLHYGNAVTVGFNLPSKTQGSKDIIKIKGVCLDDKAADRLALFAPEAVVNTIDHFKVVQKRHLNLPDEIAEVFRCPNTNCASHGEPVKSRFYVKKHNGQTRLKCHYCEKTYSRDSVAEA.

Residues cysteine 108, cysteine 113, cysteine 137, and cysteine 140 each coordinate Zn(2+).

The protein belongs to the PyrI family. As to quaternary structure, contains catalytic and regulatory chains. Requires Zn(2+) as cofactor.

Involved in allosteric regulation of aspartate carbamoyltransferase. The sequence is that of Aspartate carbamoyltransferase regulatory chain from Neisseria meningitidis serogroup A / serotype 4A (strain DSM 15465 / Z2491).